The following is a 365-amino-acid chain: 2'-hydroxybiphenyl-2-sulfinate desulfinase (365 aa).

The active site involves C27. C27, H60, and R70 together coordinate 2'-hydroxybiphenyl-2-sulfinate. R70 is an active-site residue.

The protein belongs to the DszB desulfinase family. In terms of assembly, monomer.

The protein localises to the cytoplasm. The catalysed reaction is 2'-hydroxybiphenyl-2-sulfinate + H2O = biphenyl-2-ol + sulfite + H(+). Its pathway is sulfur metabolism; dibenzothiophene degradation. Its function is as follows. Catalyzes the third and final step of the '4S' desulfurization pathway that removes covalently bound sulfur from dibenzothiophene (DBT) without breaking carbon-carbon bonds. Oxidizes 2-(2'-hydroxyphenyl)benzene sulphinate (HBPS) to 2-hydroxybiphenyl (HBP) plus sulfite. The rate-limiting step of the '4S' desulfurization pathway. This chain is 2'-hydroxybiphenyl-2-sulfinate desulfinase, found in Rhodococcus erythropolis (Arthrobacter picolinophilus).